Here is a 185-residue protein sequence, read N- to C-terminus: Ribosome-recycling factor (185 aa).

This sequence belongs to the RRF family.

The protein localises to the cytoplasm. Responsible for the release of ribosomes from messenger RNA at the termination of protein biosynthesis. May increase the efficiency of translation by recycling ribosomes from one round of translation to another. The polypeptide is Ribosome-recycling factor (Clostridioides difficile (strain 630) (Peptoclostridium difficile)).